A 192-amino-acid chain; its full sequence is Phosphoheptose isomerase (192 aa).

In terms of domain architecture, SIS spans 37–192; it reads LADSFKAGGK…IQLIEKEMVK (156 aa). A substrate-binding site is contributed by 52–54; the sequence is NGG. Residues His61 and Glu65 each coordinate Zn(2+). Residues Glu65, 93-94, 119-121, Ser124, and Gln172 each bind substrate; these read ND and STS. Zn(2+) is bound by residues Gln172 and His180.

This sequence belongs to the SIS family. GmhA subfamily. In terms of assembly, homotetramer. Zn(2+) is required as a cofactor.

Its subcellular location is the cytoplasm. The catalysed reaction is 2 D-sedoheptulose 7-phosphate = D-glycero-alpha-D-manno-heptose 7-phosphate + D-glycero-beta-D-manno-heptose 7-phosphate. It functions in the pathway carbohydrate biosynthesis; D-glycero-D-manno-heptose 7-phosphate biosynthesis; D-glycero-alpha-D-manno-heptose 7-phosphate and D-glycero-beta-D-manno-heptose 7-phosphate from sedoheptulose 7-phosphate: step 1/1. Functionally, catalyzes the isomerization of sedoheptulose 7-phosphate in D-glycero-D-manno-heptose 7-phosphate. This Enterobacter sp. (strain 638) protein is Phosphoheptose isomerase.